A 543-amino-acid polypeptide reads, in one-letter code: Ribosomal protein arginine N-methyltransferase rmt3 (543 aa).

Residues 58–81 form a C2H2-type zinc finger; it reads FCCLFCDSTFTCLKDLWSHCKEAH. Positions 217–543 constitute an SAM-dependent MTase PRMT-type domain; it reads DSYYFESYAG…KADSQSYVLN (327 aa). S-adenosyl-L-homocysteine contacts are provided by Arg239, Gly263, Asp285, Ser287, Ile313, and Glu314. Residues Glu329 and Glu338 contribute to the active site.

It belongs to the class I-like SAM-binding methyltransferase superfamily. Protein arginine N-methyltransferase family. Interacts with ef1a-c, rps2 and rps24. Note=Associates with the 40S ribosomal particle.

The protein resides in the cytoplasm. It localises to the cytosol. The enzyme catalyses L-arginyl-[protein] + S-adenosyl-L-methionine = N(omega)-methyl-L-arginyl-[protein] + S-adenosyl-L-homocysteine + H(+). It carries out the reaction L-arginyl-[protein] + 2 S-adenosyl-L-methionine = N(omega),N(omega)-dimethyl-L-arginyl-[protein] + 2 S-adenosyl-L-homocysteine + 2 H(+). Methylates (mono and asymmetric dimethylation) the guanidino nitrogens of arginyl residues in ribosomal protein rps2. This Schizosaccharomyces pombe (strain 972 / ATCC 24843) (Fission yeast) protein is Ribosomal protein arginine N-methyltransferase rmt3 (rmt3).